Here is a 166-residue protein sequence, read N- to C-terminus: Small ribosomal subunit protein uS5 (166 aa).

In terms of domain architecture, S5 DRBM spans 11–74; it reads LIEKLVSVKR…ENAKKNMVSV (64 aa).

Belongs to the universal ribosomal protein uS5 family. Part of the 30S ribosomal subunit. Contacts proteins S4 and S8.

In terms of biological role, with S4 and S12 plays an important role in translational accuracy. Located at the back of the 30S subunit body where it stabilizes the conformation of the head with respect to the body. This chain is Small ribosomal subunit protein uS5, found in Francisella tularensis subsp. holarctica (strain LVS).